A 175-amino-acid chain; its full sequence is Large ribosomal subunit protein uL10 (175 aa).

It belongs to the universal ribosomal protein uL10 family. In terms of assembly, part of the ribosomal stalk of the 50S ribosomal subunit. The N-terminus interacts with L11 and the large rRNA to form the base of the stalk. The C-terminus forms an elongated spine to which L12 dimers bind in a sequential fashion forming a multimeric L10(L12)X complex.

In terms of biological role, forms part of the ribosomal stalk, playing a central role in the interaction of the ribosome with GTP-bound translation factors. This is Large ribosomal subunit protein uL10 from Mycolicibacterium smegmatis (strain ATCC 700084 / mc(2)155) (Mycobacterium smegmatis).